A 94-amino-acid polypeptide reads, in one-letter code: Putative pterin-4-alpha-carbinolamine dehydratase (94 aa).

The protein belongs to the pterin-4-alpha-carbinolamine dehydratase family.

The enzyme catalyses (4aS,6R)-4a-hydroxy-L-erythro-5,6,7,8-tetrahydrobiopterin = (6R)-L-erythro-6,7-dihydrobiopterin + H2O. This is Putative pterin-4-alpha-carbinolamine dehydratase from Mycobacterium sp. (strain KMS).